The following is a 582-amino-acid chain: Mitogen-activated protein kinase 17 (582 aa).

Residues 22 to 61 (SSSFHLTTTGDDTVKDLHDPRREDAEGDGWEEVHEGPESD) are disordered. Basic and acidic residues predominate over residues 33–45 (DTVKDLHDPRRED). Residues 105–396 (YKVSEVIGKG…AEEALTDPYF (292 aa)) form the Protein kinase domain. Residues 111–119 (IGKGSYGVV) and lysine 134 each bind ATP. The active-site Proton acceptor is the aspartate 231. At threonine 267 the chain carries Phosphothreonine. Positions 267-269 (TDY) match the TXY motif. Tyrosine 269 bears the Phosphotyrosine mark. Disordered stretches follow at residues 474–502 (EGVS…GNKH) and 542–582 (ISAS…QLKT). Positions 482–491 (SSPQLRQNAS) are enriched in polar residues. Basic and acidic residues predominate over residues 493 to 502 (PRERAIGNKH). The span at 557-572 (DQEDSLTESMDETADE) shows a compositional bias: acidic residues.

It belongs to the protein kinase superfamily. CMGC Ser/Thr protein kinase family. MAP kinase subfamily. Post-translationally, dually phosphorylated on Thr-267 and Tyr-269, which activates the enzyme.

The enzyme catalyses L-seryl-[protein] + ATP = O-phospho-L-seryl-[protein] + ADP + H(+). It catalyses the reaction L-threonyl-[protein] + ATP = O-phospho-L-threonyl-[protein] + ADP + H(+). Its activity is regulated as follows. Activated by threonine and tyrosine phosphorylation. This Oryza sativa subsp. japonica (Rice) protein is Mitogen-activated protein kinase 17 (MPK17).